The sequence spans 167 residues: Ribosome maturation factor RimP (167 aa).

Belongs to the RimP family.

The protein localises to the cytoplasm. Its function is as follows. Required for maturation of 30S ribosomal subunits. The sequence is that of Ribosome maturation factor RimP from Streptomyces griseus subsp. griseus (strain JCM 4626 / CBS 651.72 / NBRC 13350 / KCC S-0626 / ISP 5235).